A 541-amino-acid chain; its full sequence is FAD-linked oxidoreductase pynB (541 aa).

The N-terminal stretch at 1-20 (MRLSARGFVWSALLACTASA) is a signal peptide. Residues asparagine 30, asparagine 57, asparagine 117, asparagine 131, asparagine 158, asparagine 253, asparagine 306, asparagine 343, asparagine 430, and asparagine 461 are each glycosylated (N-linked (GlcNAc...) asparagine). An FAD-binding PCMH-type domain is found at 71–242 (FNEFPALIAY…VDFDLQLMQF (172 aa)).

It belongs to the oxygen-dependent FAD-linked oxidoreductase family. The cofactor is FAD.

It participates in secondary metabolite biosynthesis. In terms of biological role, FAD-linked oxidoreductase; part of the gene cluster that mediates the biosynthesis of pyranonigrins, a family of antioxidative compounds. The first step of pyranonigrins biosynthesis is performed by the hybrid PKS-NRPS synthetase that condenses 6 malonyl-CoA units to an acetyl starter unit, to form a 1,3,5-trioxotetradecane-6,8-dienyl-ACP. The enoyl reductase (ER) domain of pynA is likely to be functional during the first two rounds of polyketide chain extension, to generate the saturated C-C bonds of the alkyl side chain. PynA subsequently forms the amide bond between the acyl chain and L-serine. Although pynA has a terminal reductase domain, it appears to require the thioesterase pynI for the release of the straight-chain intermediate from pynA via the formation of a tetramic acid pyranonigrin J. The methyltransferase pynC then coverts pyranonigrin J to pyranonigrin I via N-methylation. The FAD-dependent monooxygenase pynG catalyzes an epoxidation-mediated cyclization to form the dihydro-gamma-pyrone moiety, followed by pynD-catalyzed oxidation of the alcohol to the ketone and enolization to yield the characteristic tetramic acid-fused gamma-pyrone core of pyranonigrin H. Pyranonigrin H is substrate of pynH for dehydration-mediated exo-methylene formation from the serine side chain to produce pyranonigrin E, before the oxidase pynE reduces the exo-methylene of pyranonigrin E into a pendant methyl to form pyranonigrin G. The FAD-linked oxidoreductase pynB performs the reverse reaction and converts pyranonigrin G back to pyranonigrin E. The polypeptide is FAD-linked oxidoreductase pynB (Aspergillus niger (strain ATCC MYA-4892 / CBS 513.88 / FGSC A1513)).